The primary structure comprises 488 residues: Sucrose 6(F)-phosphate phosphorylase (488 aa).

Residues Asp49, His87, Arg195–Asp197, Glu238, His295–Asp296, Asp342–Gln345, and Arg399 each bind sucrose 6(F)-phosphate. Asp197 serves as the catalytic Nucleophile. Residue Glu238 is the Proton donor/acceptor of the active site.

Belongs to the glycosyl hydrolase 13 family. Sucrose phosphorylase subfamily. As to quaternary structure, monomer.

The enzyme catalyses sucrose 6(F)-phosphate + phosphate = beta-D-fructose 6-phosphate + alpha-D-glucose 1-phosphate. Functionally, catalyzes the reversible phosphorolysis of sucrose 6(F)-phosphate into alpha-D-glucose 1-phosphate (Glc1P) and D-fructose 6-phosphate. May be involved in a new pathway for the degradation of sucrose, which could become phosphorylated on its fructose moiety during uptake via a PTS system. To a lesser extent, can also reversibly act on sucrose in vitro. Is also able to catalyze transglycosylation reactions in vitro. The sequence is that of Sucrose 6(F)-phosphate phosphorylase from Thermoanaerobacterium thermosaccharolyticum (strain ATCC 7956 / DSM 571 / NCIMB 9385 / NCA 3814 / NCTC 13789 / WDCM 00135 / 2032) (Clostridium thermosaccharolyticum).